The following is a 191-amino-acid chain: Ribonuclease M5 1 (191 aa).

The 84-residue stretch at K10–P93 folds into the Toprim domain. Positions 16, 62, and 64 each coordinate Mg(2+).

The protein belongs to the ribonuclease M5 family. Mg(2+) is required as a cofactor.

It localises to the cytoplasm. The catalysed reaction is Endonucleolytic cleavage of RNA, removing 21 and 42 nucleotides, respectively, from the 5'- and 3'-termini of a 5S-rRNA precursor.. In terms of biological role, required for correct processing of both the 5' and 3' ends of 5S rRNA precursor. Cleaves both sides of a double-stranded region yielding mature 5S rRNA in one step. The polypeptide is Ribonuclease M5 1 (Ligilactobacillus salivarius (strain CECT 5713) (Lactobacillus salivarius)).